Here is a 240-residue protein sequence, read N- to C-terminus: Protein GrpE (240 aa).

Residues 1–13 (MTDNQRQSTTDGQ) are compositionally biased toward polar residues. The segment at 1 to 89 (MTDNQRQSTT…DAEQKAEEHW (89 aa)) is disordered. Positions 20–38 (AQATAEAAEQTQATQASAA) are enriched in low complexity. Basic and acidic residues predominate over residues 65-89 (EALRQRVEELEKALADAEQKAEEHW).

The protein belongs to the GrpE family. As to quaternary structure, homodimer.

Its subcellular location is the cytoplasm. Its function is as follows. Participates actively in the response to hyperosmotic and heat shock by preventing the aggregation of stress-denatured proteins, in association with DnaK and GrpE. It is the nucleotide exchange factor for DnaK and may function as a thermosensor. Unfolded proteins bind initially to DnaJ; upon interaction with the DnaJ-bound protein, DnaK hydrolyzes its bound ATP, resulting in the formation of a stable complex. GrpE releases ADP from DnaK; ATP binding to DnaK triggers the release of the substrate protein, thus completing the reaction cycle. Several rounds of ATP-dependent interactions between DnaJ, DnaK and GrpE are required for fully efficient folding. The chain is Protein GrpE from Halorhodospira halophila (strain DSM 244 / SL1) (Ectothiorhodospira halophila (strain DSM 244 / SL1)).